We begin with the raw amino-acid sequence, 102 residues long: Large ribosomal subunit protein uL24 (102 aa).

This sequence belongs to the universal ribosomal protein uL24 family. Part of the 50S ribosomal subunit.

Functionally, one of two assembly initiator proteins, it binds directly to the 5'-end of the 23S rRNA, where it nucleates assembly of the 50S subunit. One of the proteins that surrounds the polypeptide exit tunnel on the outside of the subunit. The chain is Large ribosomal subunit protein uL24 from Finegoldia magna (strain ATCC 29328 / DSM 20472 / WAL 2508) (Peptostreptococcus magnus).